A 629-amino-acid polypeptide reads, in one-letter code: Aspartate--tRNA(Asp/Asn) ligase (629 aa).

Residues 1–24 form a disordered region; the sequence is MERSSRADLISEDSHPARTHTCGD. Residues 12–24 show a composition bias toward basic and acidic residues; sequence EDSHPARTHTCGD. Glu194 provides a ligand contact to L-aspartate. Residues 218–221 are aspartate; the sequence is QTYK. Arg240 serves as a coordination point for L-aspartate. ATP-binding positions include 240–242 and Gln249; that span reads RDE. Residue His474 participates in L-aspartate binding. Glu508 is an ATP binding site. Arg515 contributes to the L-aspartate binding site. 560 to 563 serves as a coordination point for ATP; it reads GLDR.

This sequence belongs to the class-II aminoacyl-tRNA synthetase family. Type 1 subfamily. In terms of assembly, homodimer.

The protein resides in the cytoplasm. It carries out the reaction tRNA(Asx) + L-aspartate + ATP = L-aspartyl-tRNA(Asx) + AMP + diphosphate. Its function is as follows. Aspartyl-tRNA synthetase with relaxed tRNA specificity since it is able to aspartylate not only its cognate tRNA(Asp) but also tRNA(Asn). Reaction proceeds in two steps: L-aspartate is first activated by ATP to form Asp-AMP and then transferred to the acceptor end of tRNA(Asp/Asn). The polypeptide is Aspartate--tRNA(Asp/Asn) ligase (Salinibacter ruber (strain DSM 13855 / M31)).